Reading from the N-terminus, the 163-residue chain is Putative H/ACA ribonucleoprotein complex subunit 2-like protein (163 aa).

It belongs to the eukaryotic ribosomal protein eL8 family. Component of the small nucleolar ribonucleoprotein particle containing H/ACA-type snoRNAs (H/ACA snoRNPs).

The protein resides in the nucleus. Its subcellular location is the nucleolus. In terms of biological role, required for ribosome biogenesis. Part of a complex which catalyzes pseudouridylation of rRNA. This involves the isomerization of uridine such that the ribose is subsequently attached to C5, instead of the normal N1. Pseudouridine ('psi') residues may serve to stabilize the conformation of rRNAs. This Caenorhabditis briggsae protein is Putative H/ACA ribonucleoprotein complex subunit 2-like protein.